The chain runs to 185 residues: Large ribosomal subunit protein uL5 (185 aa).

It belongs to the universal ribosomal protein uL5 family. As to quaternary structure, part of the 50S ribosomal subunit; part of the 5S rRNA/L5/L18/L25 subcomplex. Contacts the 5S rRNA and the P site tRNA. Forms a bridge to the 30S subunit in the 70S ribosome.

This is one of the proteins that bind and probably mediate the attachment of the 5S RNA into the large ribosomal subunit, where it forms part of the central protuberance. In the 70S ribosome it contacts protein S13 of the 30S subunit (bridge B1b), connecting the 2 subunits; this bridge is implicated in subunit movement. Contacts the P site tRNA; the 5S rRNA and some of its associated proteins might help stabilize positioning of ribosome-bound tRNAs. The sequence is that of Large ribosomal subunit protein uL5 from Treponema pallidum (strain Nichols).